The chain runs to 591 residues: CTP synthase 1 (591 aa).

The Glutamine amidotransferase type-1 domain occupies 300-554 (SIALVGKYTK…LAAAGRLQSY (255 aa)). Residues Cys-399, His-526, and Glu-528 each act as for GATase activity in the active site. A phosphoserine mark is found at Ser-571 and Ser-575.

It belongs to the CTP synthase family.

It catalyses the reaction UTP + L-glutamine + ATP + H2O = CTP + L-glutamate + ADP + phosphate + 2 H(+). The protein operates within pyrimidine metabolism; CTP biosynthesis via de novo pathway; CTP from UDP: step 2/2. In terms of biological role, this enzyme is involved in the de novo synthesis of CTP, a precursor of DNA, RNA and phospholipids. Catalyzes the ATP-dependent amination of UTP to CTP with either L-glutamine or ammonia as a source of nitrogen. The polypeptide is CTP synthase 1 (ctps1) (Danio rerio (Zebrafish)).